The primary structure comprises 44 residues: Large ribosomal subunit protein bL34 (44 aa).

The protein belongs to the bacterial ribosomal protein bL34 family.

The sequence is that of Large ribosomal subunit protein bL34 from Neorickettsia sennetsu (strain ATCC VR-367 / Miyayama) (Ehrlichia sennetsu).